The following is a 1238-amino-acid chain: MPHPVTIGKRTRMSFSKIKEIADVPNLIEIQVDSYEWFLKEGLKEVFDDISPIEDYTGNLILEFVDYSLDDKPKYDIEECKERDATYCAPLKVKVRLINKETGEIKEQEVFMGDFPLMTERGTFVINGAERVIVSQLVRSPGVYYAEERDKTGKRLISSTVIPNRGAWLEYETDSNDVISVRVDRTRKQPVTVLLRALGIGTDAEIIDLLGEDERLSATLEKDNTKTVEEGLVEIYKKLRPGEPPTVESASSLLNALFFDPKRYDLAKVGRYKFNKKLALCYRIMNKISAEDIINPETGEVFVKAGEKISYDLAKAIQNAGINVVNLLMDDDKKVRVIGNNFVDIKSHIDFDIDDLNIKEKVHYPTLKEILDGYSDEEEIKEAIKSRIKELIPKHILLDDIIASISYEFNIFYNIGNIDDIDHLGNRRIRSVGELLQNQVRIGLSRMERVIKERMTVQDMEAITPQALVNIRPVSAAIKEFFGSSQLSQFMDQTNPLSELTHKRRLSALGPGGLSRERAGFEVRDVHHSHYGRMCPIETPEGPNIGLINSLGTYAKINEFGFIESPYRKFDKETSTVTDEIHYLTADEEDLFVRAQANEPLTEDGKFVNHRVVCRTVNGAVEMVPESRVDYMDISPKQVVSVATAMIPFLENDDANRALMGANMQRQAVPLVRREAPIIGTGIEYRAAKDSGAVVVARNSGIAERVTADEIIIKREDGNRDRYNLLKFKRSNSGTCINQTPIINKGDQIIKGDVIADGPATDLGEVALGRNCLIAFMTWEGYNYEDAILINERLVKEDRLSTIHIEEYECEARDTKLGPEEITRDIPNVGDSAIKNLDDRGIIRIGAEVDSGDILVGKVTPKGETELTAEERLLRAIFGEKAREVRDTSLKVPHGESGIIVDVKVFTRENGDDLSPGVNELVRCYIAKKRKIKVGDKMAGRHGNKGVISRVLPEEDMPFMENGTPLDIILNPQGIPSRMNIGQVLEVHLGLAAKTLGWYVATSVFDGANEYDIMDALEEAGYPRDGKLTLYDGRTGESFDNRITVGYMYYLKLHHLVDEKLHARSTGPYSLVTQQPLGGKAQFGGQRFGEMEVWALEAYGAAHILQEILTVKSDDVVGRVRTYEAIVKGENIPEPGIPESFKVLIKELQSLCLDVKVLTDEDQEIEVRESVDEDDTIGEFELDVVNHMGEVEESNIIEEIEDDFAENAEDEDIENLEEFTEDDLFEEEIDFDSDDFDM.

It belongs to the RNA polymerase beta chain family. In terms of assembly, the RNAP catalytic core consists of 2 alpha, 1 beta, 1 beta' and 1 omega subunit. When a sigma factor is associated with the core the holoenzyme is formed, which can initiate transcription.

The enzyme catalyses RNA(n) + a ribonucleoside 5'-triphosphate = RNA(n+1) + diphosphate. In terms of biological role, DNA-dependent RNA polymerase catalyzes the transcription of DNA into RNA using the four ribonucleoside triphosphates as substrates. This Clostridioides difficile (strain 630) (Peptoclostridium difficile) protein is DNA-directed RNA polymerase subunit beta.